A 360-amino-acid chain; its full sequence is Capsular polysaccharide phosphotransferase LcbA (360 aa).

It belongs to the stealth family.

Its function is as follows. Part of a group II capsule biosynthesis locus. This Aeromonas hydrophila protein is Capsular polysaccharide phosphotransferase LcbA (lcbA).